We begin with the raw amino-acid sequence, 630 residues long: tRNA uridine 5-carboxymethylaminomethyl modification enzyme MnmG (630 aa).

Residue 13–18 participates in FAD binding; sequence GGGHAG. 273–287 provides a ligand contact to NAD(+); sequence GPRYCPSIEDKVMRF.

It belongs to the MnmG family. As to quaternary structure, homodimer. Heterotetramer of two MnmE and two MnmG subunits. The cofactor is FAD.

Its subcellular location is the cytoplasm. Its function is as follows. NAD-binding protein involved in the addition of a carboxymethylaminomethyl (cmnm) group at the wobble position (U34) of certain tRNAs, forming tRNA-cmnm(5)s(2)U34. This Actinobacillus pleuropneumoniae serotype 5b (strain L20) protein is tRNA uridine 5-carboxymethylaminomethyl modification enzyme MnmG.